A 152-amino-acid chain; its full sequence is Cytochrome c-type biogenesis protein CcmE (152 aa).

At 1–8 the chain is on the cytoplasmic side; it reads MQARRKTR. A helical; Signal-anchor for type II membrane protein membrane pass occupies residues 9–29; sequence LYIVLAVLAGLGLTVSLTLYA. Topologically, residues 30 to 152 are periplasmic; that stretch reads LSSNIDLFYT…MTPEKTGAQP (123 aa). Heme is bound by residues His130 and Tyr134. The disordered stretch occupies residues 133–152; the sequence is NYTPPEVKNAMTPEKTGAQP.

It belongs to the CcmE/CycJ family.

Its subcellular location is the cell inner membrane. Its function is as follows. Heme chaperone required for the biogenesis of c-type cytochromes. Transiently binds heme delivered by CcmC and transfers the heme to apo-cytochromes in a process facilitated by CcmF and CcmH. The polypeptide is Cytochrome c-type biogenesis protein CcmE (Klebsiella pneumoniae (strain 342)).